Consider the following 216-residue polypeptide: Somatotropin (216 aa).

Residues 1–26 form the signal peptide; it reads MAADPQSSVLLAFALLCLPWPQEVGA. A Zn(2+)-binding site is contributed by H45. C78 and C189 are disulfide-bonded. Residue S131 is modified to Phosphoserine. E198 contacts Zn(2+). C206 and C214 are disulfide-bonded.

This sequence belongs to the somatotropin/prolactin family.

Its subcellular location is the secreted. Functionally, plays an important role in growth control. Its major role in stimulating body growth is to stimulate the liver and other tissues to secrete IGF1. It stimulates both the differentiation and proliferation of myoblasts. It also stimulates amino acid uptake and protein synthesis in muscle and other tissues. This is Somatotropin (GH1) from Ailuropoda melanoleuca (Giant panda).